An 886-amino-acid chain; its full sequence is DNA mismatch repair protein MutS (886 aa).

641–648 (GPNMAGKS) is an ATP binding site.

Belongs to the DNA mismatch repair MutS family.

In terms of biological role, this protein is involved in the repair of mismatches in DNA. It is possible that it carries out the mismatch recognition step. This protein has a weak ATPase activity. The polypeptide is DNA mismatch repair protein MutS (Rickettsia felis (strain ATCC VR-1525 / URRWXCal2) (Rickettsia azadi)).